Reading from the N-terminus, the 573-residue chain is Mitochondrial distribution and morphology protein 34 (573 aa).

An SMP-LTD domain is found at 1–195; it reads MAFNFNWSPL…LPAIIHRLSL (195 aa). 4 disordered regions span residues 301–326, 349–433, 499–521, and 550–573; these read EGLG…SSPL, FSGY…RFPN, SREK…ITDA, and LVNN…AYGQ. Low complexity predominate over residues 306–316; that stretch reads GLMSPGSPALS. The segment covering 360–373 has biased composition (basic residues); that stretch reads RHTKARPTKKRKKR. The span at 374–385 shows a compositional bias: basic and acidic residues; that stretch reads VVDLRKQSKPTD. Positions 396 to 409 are enriched in low complexity; it reads TETSTASTTFSSST.

It belongs to the MDM34 family. In terms of assembly, component of the ER-mitochondria encounter structure (ERMES) or MDM complex, composed of MMM1, MDM10, MDM12 and MDM34.

Its subcellular location is the mitochondrion outer membrane. Component of the ERMES/MDM complex, which serves as a molecular tether to connect the endoplasmic reticulum (ER) and mitochondria. Components of this complex are involved in the control of mitochondrial shape and protein biogenesis, and function in nonvesicular lipid trafficking between the ER and mitochondria. MDM34 is required for the interaction of the ER-resident membrane protein MMM1 and the outer mitochondrial membrane-resident beta-barrel protein MDM10. The chain is Mitochondrial distribution and morphology protein 34 from Uncinocarpus reesii (strain UAMH 1704).